The following is a 144-amino-acid chain: Cysteine desulfuration protein SufE (144 aa).

The active-site Cysteine persulfide intermediate is Cys51.

It belongs to the SufE family. As to quaternary structure, homodimer. Interacts with SufS.

It is found in the cytoplasm. It functions in the pathway cofactor biosynthesis; iron-sulfur cluster biosynthesis. In terms of biological role, participates in cysteine desulfuration mediated by SufS. Cysteine desulfuration mobilizes sulfur from L-cysteine to yield L-alanine and constitutes an essential step in sulfur metabolism for biosynthesis of a variety of sulfur-containing biomolecules. Functions as a sulfur acceptor for SufS, by mediating the direct transfer of the sulfur atom from the S-sulfanylcysteine of SufS, an intermediate product of cysteine desulfuration process. This is Cysteine desulfuration protein SufE from Wigglesworthia glossinidia brevipalpis.